The sequence spans 435 residues: Transcription activator AKTR-2 (435 aa).

A DNA-binding region (zn(2)-C6 fungal-type) is located at residues 16–43 (CDFCTQSKLRCNKNKPSCRRCTIQQQVC). The interval 49-103 (RRTGRPPKHPRRADDSQETSGQHGHQDPMTSAPADSCEQQSSHLDLEGDDTDFTL) is disordered. The segment covering 50–59 (RTGRPPKHPR) has biased composition (basic residues).

It is found in the nucleus. Transcription factor that regulates the expression of the gene clusters that mediate the biosynthesis of the host-selective toxins (HSTs) AK-toxins responsible for Japanese pear black spot disease by the Japanese pear pathotype. AK-toxins are esters of 9,10-epoxy 8-hydroxy 9-methyldecatrienoic acid (EDA). On cellular level, AK-toxins affect plasma membrane of susceptible cells and cause a sudden increase in loss of K(+) after a few minutes of toxin treatment. This Alternaria alternata (Alternaria rot fungus) protein is Transcription activator AKTR-2.